The primary structure comprises 441 residues: Probable cytosolic Fe-S cluster assembly factor v1g210509 (441 aa).

Cysteine 24, cysteine 72, cysteine 75, cysteine 78, cysteine 196, cysteine 252, and cysteine 401 together coordinate [4Fe-4S] cluster.

The protein belongs to the NARF family.

Functionally, component of the cytosolic iron-sulfur (Fe/S) protein assembly machinery. Required for maturation of extramitochondrial Fe/S proteins. The sequence is that of Probable cytosolic Fe-S cluster assembly factor v1g210509 from Nematostella vectensis (Starlet sea anemone).